The primary structure comprises 416 residues: Glutamyl-tRNA reductase (416 aa).

Substrate-binding positions include 49–52, Ser-105, 110–112, and Gln-116; these read TCNR and EPQ. The Nucleophile role is filled by Cys-50. 185–190 provides a ligand contact to NADP(+); sequence GAGETI.

The protein belongs to the glutamyl-tRNA reductase family. Homodimer.

The catalysed reaction is (S)-4-amino-5-oxopentanoate + tRNA(Glu) + NADP(+) = L-glutamyl-tRNA(Glu) + NADPH + H(+). It functions in the pathway porphyrin-containing compound metabolism; protoporphyrin-IX biosynthesis; 5-aminolevulinate from L-glutamyl-tRNA(Glu): step 1/2. Its function is as follows. Catalyzes the NADPH-dependent reduction of glutamyl-tRNA(Glu) to glutamate 1-semialdehyde (GSA). This chain is Glutamyl-tRNA reductase, found in Shewanella baltica (strain OS223).